The chain runs to 513 residues: ATP synthase subunit alpha 1 (513 aa).

169–176 (GDRQTGKT) lines the ATP pocket.

It belongs to the ATPase alpha/beta chains family. As to quaternary structure, F-type ATPases have 2 components, CF(1) - the catalytic core - and CF(0) - the membrane proton channel. CF(1) has five subunits: alpha(3), beta(3), gamma(1), delta(1), epsilon(1). CF(0) has three main subunits: a(1), b(2) and c(9-12). The alpha and beta chains form an alternating ring which encloses part of the gamma chain. CF(1) is attached to CF(0) by a central stalk formed by the gamma and epsilon chains, while a peripheral stalk is formed by the delta and b chains.

The protein localises to the cell inner membrane. The enzyme catalyses ATP + H2O + 4 H(+)(in) = ADP + phosphate + 5 H(+)(out). Produces ATP from ADP in the presence of a proton gradient across the membrane. The alpha chain is a regulatory subunit. This chain is ATP synthase subunit alpha 1, found in Vibrio campbellii (strain ATCC BAA-1116).